The following is a 145-amino-acid chain: Large ribosomal subunit protein uL15 (145 aa).

Positions Met-1 to Glu-50 are disordered. Gly residues predominate over residues Arg-20–Ser-30.

This sequence belongs to the universal ribosomal protein uL15 family. Part of the 50S ribosomal subunit.

Binds to the 23S rRNA. The chain is Large ribosomal subunit protein uL15 from Phytoplasma australiense.